The sequence spans 249 residues: Zinc finger protein mnm-2 (249 aa).

Residues 20–65 (PKEELETEEEDEEEDEEEELSSSEVTSENDMETESASSSASSVGQP) are disordered. Residues 24 to 52 (LETEEEDEEEDEEEELSSSEVTSENDMET) are compositionally biased toward acidic residues. C2H2-type zinc fingers lie at residues 168-190 (YRCDVCDKTFSRSNTLITHKRIH), 196-218 (FKCEHCGRAFRQPGNLTRHRLTH), and 224-246 (YVCGLCDKAFNRASNLHTHMRTH).

In terms of tissue distribution, in larva and adult, expressed in the M3 pharyngeal motor neurons, extrapharyngeal neurons in the head, the PQR tail neurons, rectal cells, vulva cells, the spermetheca-uterine valve, body wall muscle cells and neurons of the ventral nerve cord. In the embryo, expressed in pharyngeal cells, extrapharyngeal head neurons and within the tail. Expressed in body wall muscle cells during late embryonic stages. Expressed in the mother cells of the M2 and M3 pharyngeal motor neurons precursor cells at the embryonic bean stage and subsequently in the M2 and M3 cells as they are born. Expression is sustained only in the two M3 cells up to at least the 5-day-old adult. In contrast, expression gradually declines in the M2 cells beginning from the time of their birth, and is completely undetectable by the time of hatching.

It is found in the nucleus. Its function is as follows. Required in the M3 pharyngeal motor neuron to guide the growth cone of the sister M2 motor neuron during axon development. This chain is Zinc finger protein mnm-2, found in Caenorhabditis elegans.